Consider the following 425-residue polypeptide: Serine--tRNA ligase (425 aa).

230–232 (TAE) contributes to the L-serine binding site. 261–263 (RSE) contributes to the ATP binding site. Residue Glu284 participates in L-serine binding. 348–351 (EISS) is a binding site for ATP. Ser384 is a binding site for L-serine.

This sequence belongs to the class-II aminoacyl-tRNA synthetase family. Type-1 seryl-tRNA synthetase subfamily. As to quaternary structure, homodimer. The tRNA molecule binds across the dimer.

Its subcellular location is the cytoplasm. It catalyses the reaction tRNA(Ser) + L-serine + ATP = L-seryl-tRNA(Ser) + AMP + diphosphate + H(+). The catalysed reaction is tRNA(Sec) + L-serine + ATP = L-seryl-tRNA(Sec) + AMP + diphosphate + H(+). It participates in aminoacyl-tRNA biosynthesis; selenocysteinyl-tRNA(Sec) biosynthesis; L-seryl-tRNA(Sec) from L-serine and tRNA(Sec): step 1/1. Functionally, catalyzes the attachment of serine to tRNA(Ser). Is also able to aminoacylate tRNA(Sec) with serine, to form the misacylated tRNA L-seryl-tRNA(Sec), which will be further converted into selenocysteinyl-tRNA(Sec). The chain is Serine--tRNA ligase from Streptococcus pyogenes serotype M49 (strain NZ131).